Here is a 301-residue protein sequence, read N- to C-terminus: Rhodopsin (301 aa).

Residues L1–M18 are Extracellular-facing. The helical transmembrane segment at Y19–V43 threads the bilayer. At F44–N55 the chain is on the cytoplasmic side. Residues L56–I78 form a helical membrane-spanning segment. Topologically, residues T79–C92 are extracellular. A disulfide bridge links C92 with C169. Residues Q93 to F115 traverse the membrane as a helical segment. Residues D116–Y118 carry the 'Ionic lock' involved in activated form stabilization motif. Over D116 to K134 the chain is Cytoplasmic. A helical membrane pass occupies residues A135–F155. Topologically, residues G156–S182 are extracellular. The N-linked (GlcNAc...) asparagine glycan is linked to N165. The helical transmembrane segment at Y183–V204 threads the bilayer. The Cytoplasmic segment spans residues V205–K245. Residues I246–V267 traverse the membrane as a helical segment. Residues G268–V278 are Extracellular-facing. The helical transmembrane segment at Y279 to I300 threads the bilayer. K288 bears the N6-(retinylidene)lysine mark.

The protein belongs to the G-protein coupled receptor 1 family. Opsin subfamily. Homodimer. Interacts with GNAQ. Post-translationally, contains one covalently linked retinal chromophore.

It is found in the cell projection. The protein resides in the rhabdomere membrane. Functionally, photoreceptor required for image-forming vision at low light intensity. Can use both retinal and 3-dehydroretinal as visual pigment. Light-induced isomerization of 11-cis to all-trans retinal triggers a conformational change that activates signaling via G-proteins. Signaling via GNAQ probably mediates the activation of phospholipase C. In Orconectes australis (Southern cave crayfish), this protein is Rhodopsin (RHO).